The primary structure comprises 177 residues: Early nodulin-like protein 15 (177 aa).

The signal sequence occupies residues 1–24 (MASSSLLVTIFLCISVFFFSSVNA). A Phytocyanin domain is found at 25 to 129 (NEVTVGGKSG…GQKLRLVVIT (105 aa)). A disulfide bridge connects residues C83 and C117. N-linked (GlcNAc...) asparagine glycosylation is present at N84. A lipid anchor (GPI-anchor amidated serine) is attached at S153. The propeptide at 154–177 (GAAKLAGGFSVVFGLVLGLWAFFF) is removed in mature form.

This sequence belongs to the early nodulin-like (ENODL) family. Mostly expressed in seedlings, siliques and flowers, and, to a lower extent, in roots, stems and seeds, but barely in leaves.

It localises to the cell membrane. May act as a carbohydrate transporter. Required, together with ENODL11, ENODL12, ENODL13, ENODL14 and ENODL15, for male-female communication and pollen tube reception and burst at the synergid cell surface of the female gametophyte. This chain is Early nodulin-like protein 15, found in Arabidopsis thaliana (Mouse-ear cress).